The chain runs to 119 residues: Large ribosomal subunit protein bL20 (119 aa).

The protein belongs to the bacterial ribosomal protein bL20 family.

Its function is as follows. Binds directly to 23S ribosomal RNA and is necessary for the in vitro assembly process of the 50S ribosomal subunit. It is not involved in the protein synthesizing functions of that subunit. The sequence is that of Large ribosomal subunit protein bL20 from Clostridium kluyveri (strain NBRC 12016).